We begin with the raw amino-acid sequence, 113 residues long: uncharacterized protein (113 aa).

A mitochondrion-targeting transit peptide spans 1 to 14 (MATRNALRIVSRRF). The segment at 41-79 (QKLARQGPGEQAAGSASEAKVAGATASASAESGPKVSED) is disordered. The segment covering 55–73 (SASEAKVAGATASASAESG) has biased composition (low complexity).

Its subcellular location is the mitochondrion. This is an uncharacterized protein from Arabidopsis thaliana (Mouse-ear cress).